Consider the following 1483-residue polypeptide: Cystic fibrosis transmembrane conductance regulator (1483 aa).

Residues 1-77 (MQRSPLEKAS…KLINALRRCF (77 aa)) lie on the Cytoplasmic side of the membrane. Residues 78–98 (FWKFMFYGILLYLGEVTKAVQ) traverse the membrane as a helical segment. Residues 81-365 (FMFYGILLYL…WAVQTWYDSL (285 aa)) form the ABC transmembrane type-1 1 domain. Over 99-122 (PLLLGRIIASYDPDNKVERSIAIY) the chain is Extracellular. The chain crosses the membrane as a helical span at residues 123-146 (LGIGLCLLFVVRTLLLHPAIFGLH). Residues 147–195 (HIGMQMRIAMFSLIYKKTLKLSSRVLDKISIGQLISLLSNNLNKFDEGL) lie on the Cytoplasmic side of the membrane. A helical membrane pass occupies residues 196 to 216 (ALAHFVWIVPLQVTLLMGLLW). The Extracellular segment spans residues 217 to 222 (ELLQAS). Residues 223–243 (AFCGLAFLIIVAFYQAGLGRM) traverse the membrane as a helical segment. Over 244 to 298 (MMKYRDKRGGKINERLVITSEMIENIQSVKAYCWEEAMEKMIENLRQTELKLTRK) the chain is Cytoplasmic. Residues 299–319 (AAYVRYCNSSAFFFSGFFVVF) form a helical membrane-spanning segment. Over 320 to 339 (LSVLPYALMKGIILRKIFTT) the chain is Extracellular. The chain crosses the membrane as a helical span at residues 340 to 358 (ISFCIVLRMAVTRQFPWAV). The Cytoplasmic portion of the chain corresponds to 359–859 (QTWYDSLGAI…YLRYITIHKS (501 aa)). ATP-binding positions include tryptophan 401, serine 434, 458–465 (GSTGAGKT), and glutamine 493. Positions 423–646 (NGDNSLFFSN…RPDFSSKLMG (224 aa)) constitute an ABC transporter 1 domain. Cysteine 524 carries the S-palmitoyl cysteine lipid modification. A phosphoserine mark is found at serine 549 and serine 660. The tract at residues 654-832 (SAERRNSILT…EEINEEDLKE (179 aa)) is disordered R region. Serine 670 is modified (phosphoserine; by PKA). Serine 686 is subject to Phosphoserine. Lysine 688 is covalently cross-linked (Glycyl lysine isopeptide (Lys-Gly) (interchain with G-Cter in ubiquitin)). 2 positions are modified to phosphoserine: serine 700 and serine 712. Threonine 717 bears the Phosphothreonine mark. Serine 737, serine 768, serine 791, serine 796, and serine 814 each carry phosphoserine. A helical transmembrane segment spans residues 860 to 880 (LIFVLIWCLIIFLAEVAVSLV). One can recognise an ABC transmembrane type-1 2 domain in the interval 860-1157 (LIFVLIWCLI…AVNSSIDVDS (298 aa)). Residues 881 to 920 (FLLLFEKSPRQDTGNVTKSSNNSSYGVIITNTSSYYIIYI) are Extracellular-facing. 4 N-linked (GlcNAc...) asparagine glycosylation sites follow: asparagine 895, asparagine 901, asparagine 902, and asparagine 911. Residues 921-941 (YVGVADTLLALGLLRGLPLVH) form a discontinuously helical membrane-spanning segment. Residues 942–992 (TLITASKILHHKMLHSVLQAPMSTLNTLKAGGILNRFSKDIAILDDLLPLT) lie on the Cytoplasmic side of the membrane. The helical transmembrane segment at 993-1013 (IFDFIQLILIVIGAVIVVSVL) threads the bilayer. At 1014-1015 (EP) the chain is on the extracellular side. A helical membrane pass occupies residues 1016-1036 (YIFLATVPVIIAFVMLRAYFL). Residues 1037–1097 (HTSQQLKQLE…TANWFLYLST (61 aa)) are Cytoplasmic-facing. The chain crosses the membrane as a helical span at residues 1098-1118 (LRWFQMRIEMIFVIFFIAVTF). Topologically, residues 1119-1132 (ISILTTGDGEGRVG) are extracellular. A helical transmembrane segment spans residues 1133–1153 (IILTLAMNIMNTLQWAVNSSI). Topologically, residues 1154 to 1483 (DVDSLMRSVS…TEEEVQETRL (330 aa)) are cytoplasmic. The 234-residue stretch at 1213–1446 (MTVKDLTAKY…KSLFRQAISN (234 aa)) folds into the ABC transporter 2 domain. ATP contacts are provided by residues tyrosine 1222 and 1247–1254 (GRTGSGKS). The segment at 1389 to 1483 (RTIKQAFADC…TEEEVQETRL (95 aa)) is interaction with GORASP2. The S-palmitoyl cysteine moiety is linked to residue cysteine 1398. Residues serine 1447 and serine 1459 each carry the phosphoserine modification. Residues 1455–1465 (HRNSSKHKSRS) are compositionally biased toward basic residues. The segment at 1455-1483 (HRNSSKHKSRSKIAALKEETEEEVQETRL) is disordered. The span at 1473-1483 (ETEEEVQETRL) shows a compositional bias: acidic residues. The PDZ-binding motif lies at 1481–1483 (TRL).

This sequence belongs to the ABC transporter superfamily. ABCC family. CFTR transporter (TC 3.A.1.202) subfamily. As to quaternary structure, monomer; does not require oligomerization for channel activity. May form oligomers in the membrane. Interacts with SLC26A3, SLC26A6 and NHERF1. Interacts with SHANK2. Interacts with MYO6. Interacts (via C-terminus) with GOPC (via PDZ domain); this promotes CFTR internalization and thereby decreases channel activity. Interacts with SLC4A7 through NHERF1. Found in a complex with MYO5B and RAB11A. Interacts with ANO1. Interacts with SLC26A8. Interacts with AHCYL1; the interaction increases CFTR activity. Interacts with CSE1L. The core-glycosylated form interacts with GORASP2 (via PDZ GRASP-type 1 domain) in respone to ER stress. Interacts with MARCHF2; the interaction leads to CFTR ubiqtuitination and degradation. Interacts with ADGRG2. N-glycosylated. In terms of processing, phosphorylated; cAMP treatment promotes phosphorylation and activates the channel. Dephosphorylation decreases the ATPase activity (in vitro). Phosphorylation at PKA sites activates the channel. Phosphorylation at PKC sites enhances the response to phosphorylation by PKA. Phosphorylated by AMPK; this inhibits channel activity. Post-translationally, ubiquitinated, leading to its degradation in the lysosome. Deubiquitination by USP10 in early endosomes enhances its endocytic recycling to the cell membrane. Ubiquitinated by RNF185 during ER stress. Ubiquitinated by MARCHF2.

Its subcellular location is the apical cell membrane. The protein resides in the early endosome membrane. It localises to the cell membrane. It is found in the recycling endosome membrane. The protein localises to the endoplasmic reticulum membrane. Its subcellular location is the nucleus. The catalysed reaction is ATP + H2O + closed Cl(-) channel = ADP + phosphate + open Cl(-) channel.. It catalyses the reaction chloride(in) = chloride(out). It carries out the reaction hydrogencarbonate(in) = hydrogencarbonate(out). The enzyme catalyses ATP + H2O = ADP + phosphate + H(+). Its function is as follows. Epithelial ion channel that plays an important role in the regulation of epithelial ion and water transport and fluid homeostasis. Mediates the transport of chloride ions across the cell membrane. The ion channel is also permeable to HCO(3)(-); selectivity depends on the extracellular chloride concentration. Exerts its function also by modulating the activity of other ion channels and transporters. Contributes to the regulation of the pH and the ion content of the epithelial fluid layer. Modulates the activity of the epithelial sodium channel (ENaC) complex, in part by regulating the cell surface expression of the ENaC complex. May regulate bicarbonate secretion and salvage in epithelial cells by regulating the transporter SLC4A7. Can inhibit the chloride channel activity of ANO1. Plays a role in the chloride and bicarbonate homeostasis during sperm epididymal maturation and capacitation. The sequence is that of Cystic fibrosis transmembrane conductance regulator from Atelerix albiventris (Middle-African hedgehog).